The sequence spans 341 residues: Adenine deaminase (341 aa).

Positions 24, 26, and 204 each coordinate Zn(2+). E207 functions as the Proton donor in the catalytic mechanism. D285 is a binding site for Zn(2+). D286 is a substrate binding site.

Belongs to the metallo-dependent hydrolases superfamily. Adenosine and AMP deaminases family. Adenine deaminase type 2 subfamily. Requires Zn(2+) as cofactor.

It carries out the reaction adenine + H2O + H(+) = hypoxanthine + NH4(+). In terms of biological role, catalyzes the hydrolytic deamination of adenine to hypoxanthine. Plays an important role in the purine salvage pathway and in nitrogen catabolism. This is Adenine deaminase from Sphingopyxis alaskensis (strain DSM 13593 / LMG 18877 / RB2256) (Sphingomonas alaskensis).